The sequence spans 437 residues: Adenylosuccinate synthetase (437 aa).

Residues 12–18 (GDEGKGK) and 40–42 (GHT) contribute to the GTP site. Aspartate 13 (proton acceptor) is an active-site residue. Positions 13 and 40 each coordinate Mg(2+). IMP is bound by residues 13–16 (DEGK), 38–41 (NAGH), threonine 128, arginine 142, glutamine 223, threonine 238, and arginine 302. The active-site Proton donor is histidine 41. Substrate is bound at residue 298-304 (TTTGRRR). GTP is bound by residues arginine 304, 330-332 (KLD), and 412-414 (SLG).

The protein belongs to the adenylosuccinate synthetase family. In terms of assembly, homodimer. Mg(2+) serves as cofactor.

Its subcellular location is the cytoplasm. It catalyses the reaction IMP + L-aspartate + GTP = N(6)-(1,2-dicarboxyethyl)-AMP + GDP + phosphate + 2 H(+). Its pathway is purine metabolism; AMP biosynthesis via de novo pathway; AMP from IMP: step 1/2. Its function is as follows. Plays an important role in the de novo pathway of purine nucleotide biosynthesis. Catalyzes the first committed step in the biosynthesis of AMP from IMP. The sequence is that of Adenylosuccinate synthetase from Synechococcus sp. (strain CC9311).